An 881-amino-acid polypeptide reads, in one-letter code: Actin-like protein ARP8 (881 aa).

A disordered region spans residues 1–150 (MSQEEAESSI…DPAKAPPGKK (150 aa)). Composition is skewed to acidic residues over residues 14-33 (EPIDIPLEDDDDEDELEEEN) and 44-54 (ENAENESDDSV). A phosphoserine mark is found at S65 and S70. Positions 77–114 (ADEEDEDEEGEDEDEDEDDNDVDNEDENDNDNANENEN) are enriched in acidic residues. ATP is bound at residue 502-505 (NIGA).

This sequence belongs to the actin family. As to quaternary structure, component of the chromatin-remodeling INO80 complex, at least composed of ARP4, ARP5, ARP8, RVB1, RVB2, TAF14, NHP10, IES1, IES3, IES4, IES6, ACT1, IES2, IES5 and INO80. Exists as monomers and dimers, but the dimer is most probably the biologically relevant form required for stable interactions with histones that exploits the twofold symmetry of the nucleosome core.

Its subcellular location is the nucleus. The protein localises to the cytoplasm. It is found in the cytoskeleton. Functionally, probably involved in transcription regulation via its interaction with the INO80 complex, a chromatin remodeling complex. Exhibits low basal ATPase activity, and unable to polymerize. Strongly prefer nucleosomes and H3-H4 tetramers over H2A-H2B dimers, suggesting it may act as a nucleosome recognition module within the complex. The protein is Actin-like protein ARP8 (ARP8) of Saccharomyces cerevisiae (strain ATCC 204508 / S288c) (Baker's yeast).